The primary structure comprises 399 residues: Elongation factor Tu 1 (399 aa).

The region spanning 17-208 is the tr-type G domain; sequence KPHVNVGTIG…LDDYVEVPPR (192 aa). Residues 26 to 33 form a G1 region; that stretch reads GHVDHGKT. 26-33 is a binding site for GTP; that stretch reads GHVDHGKT. Position 33 (T33) interacts with Mg(2+). Residues 62 to 66 are G2; the sequence is GITIA. A G3 region spans residues 83–86; sequence DCPG. GTP contacts are provided by residues 83-87 and 138-141; these read DCPGH and NKAD. A G4 region spans residues 138 to 141; that stretch reads NKAD. The interval 175–177 is G5; that stretch reads SAL.

It belongs to the TRAFAC class translation factor GTPase superfamily. Classic translation factor GTPase family. EF-Tu/EF-1A subfamily. In terms of assembly, monomer.

It is found in the cytoplasm. It catalyses the reaction GTP + H2O = GDP + phosphate + H(+). In terms of biological role, GTP hydrolase that promotes the GTP-dependent binding of aminoacyl-tRNA to the A-site of ribosomes during protein biosynthesis. The protein is Elongation factor Tu 1 of Wolbachia sp. subsp. Brugia malayi (strain TRS).